The chain runs to 221 residues: Immediate early response gene 2 protein (221 aa).

M1 carries the N-acetylmethionine modification. Residues 54-156 form a disordered region; it reads THQPEFPPSR…EGEATSEVSN (103 aa). Positions 64–77 are enriched in basic and acidic residues; sequence RALDPRLHPPREPE. A compositionally biased stretch (low complexity) spans 125–136; the sequence is SDLSDGSDAGLV.

Belongs to the IER family.

Its subcellular location is the cytoplasm. The protein localises to the nucleus. Functionally, DNA-binding protein that seems to act as a transcription factor. Involved in the regulation of neuronal differentiation, acts upon JNK-signaling pathway activation and plays a role in neurite outgrowth in hippocampal cells. May mediate with FIBP FGF-signaling in the establishment of laterality in the embryo. Promotes cell motility, seems to stimulate tumor metastasis. In Rattus norvegicus (Rat), this protein is Immediate early response gene 2 protein (Ier2).